A 275-amino-acid polypeptide reads, in one-letter code: 2,3,4,5-tetrahydropyridine-2,6-dicarboxylate N-succinyltransferase (275 aa).

Arg104 and Asp141 together coordinate substrate.

Belongs to the transferase hexapeptide repeat family. In terms of assembly, homotrimer.

Its subcellular location is the cytoplasm. It catalyses the reaction (S)-2,3,4,5-tetrahydrodipicolinate + succinyl-CoA + H2O = (S)-2-succinylamino-6-oxoheptanedioate + CoA. The protein operates within amino-acid biosynthesis; L-lysine biosynthesis via DAP pathway; LL-2,6-diaminopimelate from (S)-tetrahydrodipicolinate (succinylase route): step 1/3. In Tolumonas auensis (strain DSM 9187 / NBRC 110442 / TA 4), this protein is 2,3,4,5-tetrahydropyridine-2,6-dicarboxylate N-succinyltransferase.